Here is a 490-residue protein sequence, read N- to C-terminus: Katanin p60 ATPase-containing subunit A-like 1 (490 aa).

The residue at position 1 (M1) is an N-acetylmethionine. The interval S87–D182 is disordered. Residues S116–M127 show a composition bias toward basic and acidic residues. Residues A128–A139 show a composition bias toward low complexity. Residues S143–M169 are compositionally biased toward basic and acidic residues. Position 174 is a phosphoserine (S174). ATP is bound at residue G248–T255.

This sequence belongs to the AAA ATPase family. Katanin p60 subunit A1 subfamily. A-like 1 sub-subfamily. As to quaternary structure, interacts with KATNB1 and KATNBL1.

It is found in the cytoplasm. The protein resides in the cytoskeleton. The protein localises to the spindle pole. Its subcellular location is the spindle. It catalyses the reaction n ATP + n H2O + a microtubule = n ADP + n phosphate + (n+1) alpha/beta tubulin heterodimers.. Functionally, regulates microtubule dynamics in Sertoli cells, a process that is essential for spermiogenesis and male fertility. Severs microtubules in an ATP-dependent manner, promoting rapid reorganization of cellular microtubule arrays. Has microtubule-severing activity in vitro. The chain is Katanin p60 ATPase-containing subunit A-like 1 from Otolemur garnettii (Small-eared galago).